We begin with the raw amino-acid sequence, 267 residues long: Undecaprenyl-diphosphatase (267 aa).

The next 7 membrane-spanning stretches (helical) occupy residues 4–24 (LYALILGIIEGLTEFLPISST), 41–61 (FWKSFLIIIQLGSILAVIFVF), 69–89 (LDIWLKLAVGFFPTGVIGLFV), 96–116 (LFNGWVVVGMLIFGGVVFILI), 173–193 (AAEFSFLLAIPTMIIATAYSI), 207–227 (IPLGIGFITAFIVAVLVIKFF), and 239–259 (FGIYRIILGFVFFYLYYSGIL).

Belongs to the UppP family.

It is found in the cell inner membrane. The catalysed reaction is di-trans,octa-cis-undecaprenyl diphosphate + H2O = di-trans,octa-cis-undecaprenyl phosphate + phosphate + H(+). Its function is as follows. Catalyzes the dephosphorylation of undecaprenyl diphosphate (UPP). Confers resistance to bacitracin. The protein is Undecaprenyl-diphosphatase of Campylobacter jejuni subsp. jejuni serotype O:2 (strain ATCC 700819 / NCTC 11168).